The primary structure comprises 268 residues: Eukaryotic translation initiation factor 3 subunit J (268 aa).

Disordered regions lie at residues 1-27 (MSWD…DDEF), 40-63 (DAEE…KVDK), and 217-249 (LAKV…KKDQ). Basic residues predominate over residues 47 to 58 (QKQKPKAAPKAA). Positions 191-221 (IESIRQTVATLNVLIKEKERQERQARLAKVK) form a coiled coil.

Belongs to the eIF-3 subunit J family. In terms of assembly, component of the eukaryotic translation initiation factor 3 (eIF-3) complex.

Its subcellular location is the cytoplasm. Its function is as follows. Component of the eukaryotic translation initiation factor 3 (eIF-3) complex, which is involved in protein synthesis of a specialized repertoire of mRNAs and, together with other initiation factors, stimulates binding of mRNA and methionyl-tRNAi to the 40S ribosome. The eIF-3 complex specifically targets and initiates translation of a subset of mRNAs involved in cell proliferation. This is Eukaryotic translation initiation factor 3 subunit J from Eremothecium gossypii (strain ATCC 10895 / CBS 109.51 / FGSC 9923 / NRRL Y-1056) (Yeast).